A 145-amino-acid polypeptide reads, in one-letter code: uncharacterized protein (145 aa).

Residues 1-49 are disordered; sequence MLSIFKNLLGTSEEDGTTQEANSKDTKGLKEERKRKKRKNKYKIPPGHT. The span at 22 to 32 shows a compositional bias: basic and acidic residues; it reads NSKDTKGLKEE. Basic residues predominate over residues 33 to 42; sequence RKRKKRKNKY. Position 68 is a phosphoserine (serine 68). In terms of domain architecture, Cytochrome b5 heme-binding spans 69-145; it reads PISVTAEELA…LKTSFVGYLV (77 aa). Residues histidine 104 and histidine 127 each coordinate heme.

The protein belongs to the cytochrome b5 family.

Its subcellular location is the cytoplasm. This is an uncharacterized protein from Schizosaccharomyces pombe (strain 972 / ATCC 24843) (Fission yeast).